The sequence spans 284 residues: uncharacterized protein (284 aa).

The chain crosses the membrane as a helical span at residues 12–32; sequence ILFILFVVAFCVYLVPRVAIN.

Belongs to the serine esterase family.

It is found in the membrane. This is an uncharacterized protein from Escherichia coli (strain K12).